The chain runs to 416 residues: Glutamyl-tRNA reductase (416 aa).

Residues 49-52 (TCNR), Ser105, 110-112 (EPQ), and Gln116 contribute to the substrate site. Residue Cys50 is the Nucleophile of the active site. 185 to 190 (GAGETI) serves as a coordination point for NADP(+).

Belongs to the glutamyl-tRNA reductase family. In terms of assembly, homodimer.

The catalysed reaction is (S)-4-amino-5-oxopentanoate + tRNA(Glu) + NADP(+) = L-glutamyl-tRNA(Glu) + NADPH + H(+). Its pathway is porphyrin-containing compound metabolism; protoporphyrin-IX biosynthesis; 5-aminolevulinate from L-glutamyl-tRNA(Glu): step 1/2. Catalyzes the NADPH-dependent reduction of glutamyl-tRNA(Glu) to glutamate 1-semialdehyde (GSA). In Shewanella pealeana (strain ATCC 700345 / ANG-SQ1), this protein is Glutamyl-tRNA reductase.